Reading from the N-terminus, the 489-residue chain is Probable cytosol aminopeptidase (489 aa).

Residues Lys254 and Asp259 each coordinate Mn(2+). The active site involves Lys266. Residues Asp277, Asp336, and Glu338 each coordinate Mn(2+). Residue Arg340 is part of the active site.

Belongs to the peptidase M17 family. Mn(2+) serves as cofactor.

The protein resides in the cytoplasm. It carries out the reaction Release of an N-terminal amino acid, Xaa-|-Yaa-, in which Xaa is preferably Leu, but may be other amino acids including Pro although not Arg or Lys, and Yaa may be Pro. Amino acid amides and methyl esters are also readily hydrolyzed, but rates on arylamides are exceedingly low.. The catalysed reaction is Release of an N-terminal amino acid, preferentially leucine, but not glutamic or aspartic acids.. In terms of biological role, presumably involved in the processing and regular turnover of intracellular proteins. Catalyzes the removal of unsubstituted N-terminal amino acids from various peptides. The polypeptide is Probable cytosol aminopeptidase (Cereibacter sphaeroides (strain ATCC 17025 / ATH 2.4.3) (Rhodobacter sphaeroides)).